A 392-amino-acid polypeptide reads, in one-letter code: MSRAFIIDPTISAIDGLYDLLGIGIPNQGGILYSSLEYFEKALEELAAAFPGDGWLGSAADKYAGKNRNHVNFFQELADLDRQLISLIHDQANAVQTTRDILEGAKKGLEFVRPVAVDLTYIPVVGHALSAAFQAPFCAGAMAVVGGALAYLVVKTLINATQLLKLLAKLAELVAAAIADIISDVADIIKGTLGEVWEFITNALNGLKELWDKLTGWVTGLFSRGWSNLESFFAGVPGLTGATSGLSQVTGLFGAAGLSASSGLAHADSLASSASLPALAGIGGGSGFGGLPSLAQVHAASTRQALRPRADGPVGAAAEQVGGQSQLVSAQGSQGMGGPVGMGGMHPSSGASKGTTTKKYSEGAAAGTEDAERAPVEADAGGGQKVLVRNVV.

Positions 302–392 are disordered; that stretch reads TRQALRPRAD…GQKVLVRNVV (91 aa). Gly residues predominate over residues 334-344; sequence QGMGGPVGMGG.

In terms of assembly, homodimer; disulfide-linked. An artificial EsxB-EsxA heterodimer interacts with EspA.

The protein resides in the secreted. Functionally, required for secretion of EsxA (ESAT-6) and EsxB (CFP-10) and for virulence. Involved in translocation of bacteria from the host (human) phagolysosome to the host cytoplasm. In Mycobacterium tuberculosis (strain ATCC 25618 / H37Rv), this protein is ESX-1 secretion-associated protein EspA.